The following is a 254-amino-acid chain: Phosphoribosylaminoimidazole-succinocarboxamide synthase (254 aa).

It belongs to the SAICAR synthetase family.

It carries out the reaction 5-amino-1-(5-phospho-D-ribosyl)imidazole-4-carboxylate + L-aspartate + ATP = (2S)-2-[5-amino-1-(5-phospho-beta-D-ribosyl)imidazole-4-carboxamido]succinate + ADP + phosphate + 2 H(+). It functions in the pathway purine metabolism; IMP biosynthesis via de novo pathway; 5-amino-1-(5-phospho-D-ribosyl)imidazole-4-carboxamide from 5-amino-1-(5-phospho-D-ribosyl)imidazole-4-carboxylate: step 1/2. The polypeptide is Phosphoribosylaminoimidazole-succinocarboxamide synthase (Gluconobacter oxydans (strain 621H) (Gluconobacter suboxydans)).